We begin with the raw amino-acid sequence, 220 residues long: Deoxyribose-phosphate aldolase (220 aa).

Catalysis depends on D89, which acts as the Proton donor/acceptor. The active-site Schiff-base intermediate with acetaldehyde is K151. K180 (proton donor/acceptor) is an active-site residue.

It belongs to the DeoC/FbaB aldolase family. DeoC type 1 subfamily.

It localises to the cytoplasm. The enzyme catalyses 2-deoxy-D-ribose 5-phosphate = D-glyceraldehyde 3-phosphate + acetaldehyde. Its pathway is carbohydrate degradation; 2-deoxy-D-ribose 1-phosphate degradation; D-glyceraldehyde 3-phosphate and acetaldehyde from 2-deoxy-alpha-D-ribose 1-phosphate: step 2/2. Its function is as follows. Catalyzes a reversible aldol reaction between acetaldehyde and D-glyceraldehyde 3-phosphate to generate 2-deoxy-D-ribose 5-phosphate. The sequence is that of Deoxyribose-phosphate aldolase from Lactococcus lactis subsp. cremoris (strain SK11).